Consider the following 377-residue polypeptide: NADH dehydrogenase [ubiquinone] 1 alpha subcomplex subunit 9, mitochondrial (377 aa).

Residues 1-35 (MAAAVRFQVVRALPMSRPAISAAATSVFCSSSHRQ) constitute a mitochondrion transit peptide. Lysine 175 is modified (N6-succinyllysine). 2 positions are modified to N6-acetyllysine: lysine 189 and lysine 370.

It belongs to the complex I NDUFA9 subunit family. As to quaternary structure, complex I is composed of 45 different subunits. This a component of the hydrophobic protein fraction. Interacts with BLOC1S1. Interacts with SLC2A4. Interacts with CLOCK. Interacts with RAB5IF. FAD is required as a cofactor. Post-translationally, acetylated on lysine residues. BLOC1S1 is required for acetylation. Acetylated by CLOCK in a circadian manner. As to expression, expressed by the principal cells of the epididymis. Detected in flagella of epididymal sperm (at protein level).

The protein resides in the mitochondrion matrix. Its function is as follows. Accessory subunit of the mitochondrial membrane respiratory chain NADH dehydrogenase (Complex I), that is believed not to be involved in catalysis. Complex I functions in the transfer of electrons from NADH to the respiratory chain. The immediate electron acceptor for the enzyme is believed to be ubiquinone. This Rattus norvegicus (Rat) protein is NADH dehydrogenase [ubiquinone] 1 alpha subcomplex subunit 9, mitochondrial.